The following is a 298-amino-acid chain: Heat stress transcription factor C-2a (298 aa).

The disordered stretch occupies residues S105–A128. The segment at L145–V181 is hydrophobic repeat HR-A/B. Residues K213–R216 carry the Nuclear localization signal motif.

Belongs to the HSF family. Class C subfamily. Homotrimer. Exhibits temperature-dependent phosphorylation.

It localises to the nucleus. In terms of biological role, transcriptional regulator that specifically binds DNA of heat shock promoter elements (HSE). This is Heat stress transcription factor C-2a (HSFC2A) from Oryza sativa subsp. japonica (Rice).